A 122-amino-acid polypeptide reads, in one-letter code: Large ribosomal subunit protein uL14 (122 aa).

It belongs to the universal ribosomal protein uL14 family. In terms of assembly, part of the 50S ribosomal subunit. Forms a cluster with proteins L3 and L19. In the 70S ribosome, L14 and L19 interact and together make contacts with the 16S rRNA in bridges B5 and B8.

In terms of biological role, binds to 23S rRNA. Forms part of two intersubunit bridges in the 70S ribosome. This Shewanella amazonensis (strain ATCC BAA-1098 / SB2B) protein is Large ribosomal subunit protein uL14.